We begin with the raw amino-acid sequence, 101 residues long: Small ribosomal subunit protein uS17 (101 aa).

Belongs to the universal ribosomal protein uS17 family. Part of the 30S ribosomal subunit.

In terms of biological role, one of the primary rRNA binding proteins, it binds specifically to the 5'-end of 16S ribosomal RNA. This chain is Small ribosomal subunit protein uS17, found in Koribacter versatilis (strain Ellin345).